A 254-amino-acid chain; its full sequence is Type III pantothenate kinase (254 aa).

Position 6–13 (6–13 (DVGNTNTV)) interacts with ATP. Residues Y100 and 107–110 (GADR) each bind substrate. The active-site Proton acceptor is D109. Position 129 (D129) interacts with K(+). Residue T132 participates in ATP binding. Residue T184 coordinates substrate.

The protein belongs to the type III pantothenate kinase family. Homodimer. NH4(+) is required as a cofactor. Requires K(+) as cofactor.

The protein localises to the cytoplasm. The catalysed reaction is (R)-pantothenate + ATP = (R)-4'-phosphopantothenate + ADP + H(+). The protein operates within cofactor biosynthesis; coenzyme A biosynthesis; CoA from (R)-pantothenate: step 1/5. Functionally, catalyzes the phosphorylation of pantothenate (Pan), the first step in CoA biosynthesis. This chain is Type III pantothenate kinase, found in Syntrophus aciditrophicus (strain SB).